A 231-amino-acid chain; its full sequence is 5'-methylthioadenosine/S-adenosylhomocysteine nucleosidase (231 aa).

Glu12 (proton acceptor) is an active-site residue. Substrate-binding positions include Gly78, Val153, and 174 to 175 (ME). Residue Asp198 is the Proton donor of the active site.

It belongs to the PNP/UDP phosphorylase family. MtnN subfamily.

The enzyme catalyses S-adenosyl-L-homocysteine + H2O = S-(5-deoxy-D-ribos-5-yl)-L-homocysteine + adenine. It catalyses the reaction S-methyl-5'-thioadenosine + H2O = 5-(methylsulfanyl)-D-ribose + adenine. The catalysed reaction is 5'-deoxyadenosine + H2O = 5-deoxy-D-ribose + adenine. It functions in the pathway amino-acid biosynthesis; L-methionine biosynthesis via salvage pathway; S-methyl-5-thio-alpha-D-ribose 1-phosphate from S-methyl-5'-thioadenosine (hydrolase route): step 1/2. In terms of biological role, catalyzes the irreversible cleavage of the glycosidic bond in both 5'-methylthioadenosine (MTA) and S-adenosylhomocysteine (SAH/AdoHcy) to adenine and the corresponding thioribose, 5'-methylthioribose and S-ribosylhomocysteine, respectively. Also cleaves 5'-deoxyadenosine, a toxic by-product of radical S-adenosylmethionine (SAM) enzymes, into 5-deoxyribose and adenine. The protein is 5'-methylthioadenosine/S-adenosylhomocysteine nucleosidase of Aliivibrio salmonicida (strain LFI1238) (Vibrio salmonicida (strain LFI1238)).